The chain runs to 606 residues: Lysosomal cobalamin transporter ABCD4 (606 aa).

The ABC transmembrane type-1 domain maps to 39 to 332 (NALMFLTLLC…CFTQLIDLST (294 aa)). A run of 5 helical transmembrane segments spans residues 43 to 63 (FLTL…VGLI), 76 to 96 (LEGF…NSTL), 190 to 210 (IFGY…PIVM), 279 to 299 (YLGS…GVYG), and 314 to 334 (AFVC…STTL). Residues 389–603 (LERVSISAPS…GGGRWELMRI (215 aa)) form the ABC transporter domain. 421–428 (GNTGTGKT) is an ATP binding site.

The protein belongs to the ABC transporter superfamily. ABCD family. Peroxisomal fatty acyl CoA transporter (TC 3.A.1.203) subfamily. In terms of assembly, homodimer or heterodimer. Interacts with LMBRD1; this interaction induces the translocation of ABCD4 from the ER to the lysosome membrane. Interacts with LMBRD1 and MMACHC; this interaction ensures the transport of cobalamin from the lysosome to the cytosol. In terms of tissue distribution, ubiquitous.

The protein resides in the endoplasmic reticulum membrane. Its subcellular location is the lysosome membrane. It carries out the reaction an R-cob(III)alamin(out) + ATP + H2O = an R-cob(III)alamin(in) + ADP + phosphate + H(+). In terms of biological role, lysosomal membrane protein that transports cobalamin (Vitamin B12) from the lysosomal lumen to the cytosol in an ATP-dependent manner. Targeted by LMBRD1 lysosomal chaperone from the endoplasmic reticulum to the lysosomal membrane. Then forms a complex with lysosomal chaperone LMBRD1 and cytosolic MMACHC to transport cobalamin across the lysosomal membrane. The chain is Lysosomal cobalamin transporter ABCD4 from Homo sapiens (Human).